Consider the following 249-residue polypeptide: Domoic acid biosynthesis cluster protein B (249 aa).

Its function is as follows. Unknown function: part of the gene cluster that mediates the biosynthesis of domoic acid (DA) and derivatives, natural products with neurochemical activity acting as ionotropic glutamate receptor (iGluR) agonists, thus being neurotoxins causing amnesic shellfish poisoning (ASP). The sequence is that of Domoic acid biosynthesis cluster protein B from Pseudo-nitzschia multiseries (Marine planktonic diatom).